The following is a 924-amino-acid chain: Isoleucine--tRNA ligase (924 aa).

Residues 57 to 67 (PYANGDIHMGH) carry the 'HIGH' region motif. E552 provides a ligand contact to L-isoleucyl-5'-AMP. Residues 593-597 (KMSKS) carry the 'KMSKS' region motif. ATP is bound at residue K596. Residues C891, C894, C911, and C914 each coordinate Zn(2+).

It belongs to the class-I aminoacyl-tRNA synthetase family. IleS type 1 subfamily. In terms of assembly, monomer. The cofactor is Zn(2+).

It is found in the cytoplasm. The enzyme catalyses tRNA(Ile) + L-isoleucine + ATP = L-isoleucyl-tRNA(Ile) + AMP + diphosphate. In terms of biological role, catalyzes the attachment of isoleucine to tRNA(Ile). As IleRS can inadvertently accommodate and process structurally similar amino acids such as valine, to avoid such errors it has two additional distinct tRNA(Ile)-dependent editing activities. One activity is designated as 'pretransfer' editing and involves the hydrolysis of activated Val-AMP. The other activity is designated 'posttransfer' editing and involves deacylation of mischarged Val-tRNA(Ile). This is Isoleucine--tRNA ligase from Geobacillus kaustophilus (strain HTA426).